The primary structure comprises 422 residues: Beta-1,3-galactosyltransferase 2 (422 aa).

The Cytoplasmic portion of the chain corresponds to 1–24 (MLQWRRRHCCFAKMTWNAKRSLFR). The helical; Signal-anchor for type II membrane protein transmembrane segment at 25-45 (THLIGVLSLVFLFAMFLFFNH) threads the bilayer. The Lumenal segment spans residues 46 to 422 (HDWLPGRAGF…AGRYRHRKLH (377 aa)). Residues N75, N100, N119, N176, and N226 are each glycosylated (N-linked (GlcNAc...) asparagine). Residues 90 to 110 (TLRPQTATNSNNTDLSPQGVT) are disordered.

It belongs to the glycosyltransferase 31 family. Mn(2+) serves as cofactor. As to expression, detected in heart and brain.

The protein resides in the golgi apparatus membrane. It catalyses the reaction an N-acetyl-beta-D-glucosaminyl derivative + UDP-alpha-D-galactose = a beta-D-galactosyl-(1-&gt;3)-N-acetyl-beta-D-glucosaminyl derivative + UDP + H(+). The catalysed reaction is a beta-D-GlcNAc-(1-&gt;3)-beta-D-Gal-(1-&gt;4)-beta-D-Glc-(1&lt;-&gt;1)-Cer(d18:1(4E)) + UDP-alpha-D-galactose = a beta-D-Gal-(1-&gt;3)-beta-D-GlcNAc-(1-&gt;3)-beta-D-Gal-(1-&gt;4)-beta-D-Glc-(1&lt;-&gt;1')-Cer(d18:1(4E)) + UDP + H(+). The enzyme catalyses a neolactoside IV(3)-beta-GlcNAc-nLc4Cer(d18:1(4E)) + UDP-alpha-D-galactose = a neolactoside IV(3)-beta-[Gal-beta-(1-&gt;3)-GlcNAc]-nLc4Cer(d18:1(4E)) + UDP + H(+). It participates in protein modification; protein glycosylation. Functionally, beta-1,3-galactosyltransferase that transfers galactose from UDP-galactose to substrates with a terminal beta-N-acetylglucosamine (beta-GlcNAc) residue. Can also utilize substrates with a terminal galactose residue, albeit with lower efficiency. Involved in the biosynthesis of the carbohydrate moieties of glycolipids and glycoproteins. Inactive towards substrates with terminal alpha-N-acetylglucosamine (alpha-GlcNAc) or alpha-N-acetylgalactosamine (alpha-GalNAc) residues. The chain is Beta-1,3-galactosyltransferase 2 from Homo sapiens (Human).